Reading from the N-terminus, the 827-residue chain is DNA-binding protein RAP1 (827 aa).

Disordered regions lie at residues S29–N128, L221–V268, and Q308–G339. The span at A44–E57 shows a compositional bias: polar residues. Residues T58 to D72 are compositionally biased toward basic and acidic residues. Polar residues predominate over residues A92–P107. The BRCT domain occupies V121–V208. A compositionally biased stretch (low complexity) spans S227–S237. Residues D238–T247 show a composition bias toward basic and acidic residues. Positions I249–D260 are enriched in polar residues. Over residues D310–V319 the composition is skewed to low complexity. The segment covering L326–G339 has biased composition (polar residues). The 61-residue stretch at L355 to L415 folds into the HTH myb-type domain. Residues Y388–L411 constitute a DNA-binding region (H-T-H motif). T486 is modified (phosphothreonine). The segment at Q567–N613 is disordered. Residues N601–T611 are compositionally biased toward polar residues. Residues S630–P695 form an activation domain region. S731 is subject to Phosphoserine.

The protein belongs to the RAP1 family. As to quaternary structure, interacts (via C-terminus) with RIF1. Interacts (via C-terminus) with SIR3. Interacts (via C-terminus) with SIR4. Interacts with a GCR1 homodimer.

It localises to the nucleus. Its subcellular location is the chromosome. The protein localises to the telomere. Its function is as follows. Essential regulatory protein in yeast whose DNA-binding sites are found at three types of chromosomal elements: promoters, silencers, and telomeres. RAP1 is also involved in the regulation of telomere structure, where its binding sites are found within the terminal poly[C(1-3)A] sequences. The opposite regulatory functions of RAP1 are not intrinsic to its binding sites but, instead, result from interactions with different factors at promoters and silencers. RAP1 mediates repression of the HM loci and telomeres by recruiting the SIR complex. May also target the binding of RIF1 and RIF2 to silencers and telomeres. Forms with GCR1 a transcriptional activation complex that is required for expression of glycolytic and ribosomal gene. The sequence is that of DNA-binding protein RAP1 (RAP1) from Saccharomyces cerevisiae (strain ATCC 204508 / S288c) (Baker's yeast).